A 457-amino-acid polypeptide reads, in one-letter code: uncharacterized protein (457 aa).

2 helical membrane passes run 1–21 (MVSSLASNIILALVVVLMTLL) and 250–270 (ILIVTPGAGVGGLSHTLATTF).

The protein localises to the membrane. This is an uncharacterized protein from Saccharomyces cerevisiae (strain ATCC 204508 / S288c) (Baker's yeast).